Here is a 280-residue protein sequence, read N- to C-terminus: F420-dependent methylenetetrahydromethanopterin dehydrogenase (280 aa).

The protein belongs to the MTD family.

It carries out the reaction 5,10-methylenetetrahydromethanopterin + oxidized coenzyme F420-(gamma-L-Glu)(n) + 2 H(+) = 5,10-methenyl-5,6,7,8-tetrahydromethanopterin + reduced coenzyme F420-(gamma-L-Glu)(n). The protein operates within one-carbon metabolism; methanogenesis from CO(2); 5,10-methylene-5,6,7,8-tetrahydromethanopterin from 5,10-methenyl-5,6,7,8-tetrahydromethanopterin (coenzyme F420 route): step 1/1. Catalyzes the reversible reduction of methenyl-H(4)MPT(+) to methylene-H(4)MPT. This is F420-dependent methylenetetrahydromethanopterin dehydrogenase from Methanosphaerula palustris (strain ATCC BAA-1556 / DSM 19958 / E1-9c).